A 326-amino-acid chain; its full sequence is Lipoyl synthase (326 aa).

The [4Fe-4S] cluster site is built by Cys-74, Cys-79, Cys-85, Cys-100, Cys-104, Cys-107, and Ser-314. The Radical SAM core domain occupies 85 to 303; that stretch reads CFGKGTATFM…EEEAYKMGFT (219 aa).

It belongs to the radical SAM superfamily. Lipoyl synthase family. It depends on [4Fe-4S] cluster as a cofactor.

The protein localises to the cytoplasm. The enzyme catalyses [[Fe-S] cluster scaffold protein carrying a second [4Fe-4S](2+) cluster] + N(6)-octanoyl-L-lysyl-[protein] + 2 oxidized [2Fe-2S]-[ferredoxin] + 2 S-adenosyl-L-methionine + 4 H(+) = [[Fe-S] cluster scaffold protein] + N(6)-[(R)-dihydrolipoyl]-L-lysyl-[protein] + 4 Fe(3+) + 2 hydrogen sulfide + 2 5'-deoxyadenosine + 2 L-methionine + 2 reduced [2Fe-2S]-[ferredoxin]. It participates in protein modification; protein lipoylation via endogenous pathway; protein N(6)-(lipoyl)lysine from octanoyl-[acyl-carrier-protein]: step 2/2. In terms of biological role, catalyzes the radical-mediated insertion of two sulfur atoms into the C-6 and C-8 positions of the octanoyl moiety bound to the lipoyl domains of lipoate-dependent enzymes, thereby converting the octanoylated domains into lipoylated derivatives. This is Lipoyl synthase from Delftia acidovorans (strain DSM 14801 / SPH-1).